Reading from the N-terminus, the 345-residue chain is Adenylosuccinate synthetase (345 aa).

GTP is bound by residues 18 to 24 (GDEGKGK) and 48 to 50 (GHT). D19 functions as the Proton acceptor in the catalytic mechanism. The Mg(2+) site is built by D19 and G48. IMP contacts are provided by residues 19–22 (DEGK), 46–49 (NAGH), T133, R147, Q185, T200, and R262. The active-site Proton donor is the H49. Residue 258–264 (TVTGRRR) coordinates substrate. Residues R264, 290 to 292 (GLD), and 330 to 332 (STG) contribute to the GTP site.

The protein belongs to the adenylosuccinate synthetase family. In terms of assembly, homodimer. Requires Mg(2+) as cofactor.

Its subcellular location is the cytoplasm. It catalyses the reaction IMP + L-aspartate + GTP = N(6)-(1,2-dicarboxyethyl)-AMP + GDP + phosphate + 2 H(+). Its pathway is purine metabolism; AMP biosynthesis via de novo pathway; AMP from IMP: step 1/2. Plays an important role in the de novo pathway of purine nucleotide biosynthesis. Catalyzes the first committed step in the biosynthesis of AMP from IMP. In Methanocaldococcus jannaschii (strain ATCC 43067 / DSM 2661 / JAL-1 / JCM 10045 / NBRC 100440) (Methanococcus jannaschii), this protein is Adenylosuccinate synthetase.